The chain runs to 147 residues: D-aminoacyl-tRNA deacylase (147 aa).

The Gly-cisPro motif, important for rejection of L-amino acids signature appears at G138–P139.

Belongs to the DTD family. As to quaternary structure, homodimer.

The protein localises to the cytoplasm. It carries out the reaction glycyl-tRNA(Ala) + H2O = tRNA(Ala) + glycine + H(+). The enzyme catalyses a D-aminoacyl-tRNA + H2O = a tRNA + a D-alpha-amino acid + H(+). An aminoacyl-tRNA editing enzyme that deacylates mischarged D-aminoacyl-tRNAs. Also deacylates mischarged glycyl-tRNA(Ala), protecting cells against glycine mischarging by AlaRS. Acts via tRNA-based rather than protein-based catalysis; rejects L-amino acids rather than detecting D-amino acids in the active site. By recycling D-aminoacyl-tRNA to D-amino acids and free tRNA molecules, this enzyme counteracts the toxicity associated with the formation of D-aminoacyl-tRNA entities in vivo and helps enforce protein L-homochirality. The sequence is that of D-aminoacyl-tRNA deacylase from Prosthecochloris aestuarii (strain DSM 271 / SK 413).